A 240-amino-acid chain; its full sequence is Small ribosomal subunit protein uS3 (240 aa).

Positions Ile39–Arg107 constitute a KH type-2 domain. The segment covering Pro212–Leu222 has biased composition (basic and acidic residues). The segment at Pro212–Arg240 is disordered. Residues Glu224–Gly234 are compositionally biased toward gly residues.

This sequence belongs to the universal ribosomal protein uS3 family. In terms of assembly, part of the 30S ribosomal subunit. Forms a tight complex with proteins S10 and S14.

Binds the lower part of the 30S subunit head. Binds mRNA in the 70S ribosome, positioning it for translation. The protein is Small ribosomal subunit protein uS3 of Dinoroseobacter shibae (strain DSM 16493 / NCIMB 14021 / DFL 12).